Consider the following 123-residue polypeptide: MAITKDDILEAVGAMTVMELNDLVKAFEEKFGVSAAAMAVAAPAAGAAAAAEEKTEFDVVLTAAGDNKVNVIKVVRALTGLGLKEAKDMVDGAPKTVKEGVSKADAEAMLKQLTEAGAKAEIK.

This sequence belongs to the bacterial ribosomal protein bL12 family. In terms of assembly, homodimer. Part of the ribosomal stalk of the 50S ribosomal subunit. Forms a multimeric L10(L12)X complex, where L10 forms an elongated spine to which 2 to 4 L12 dimers bind in a sequential fashion. Binds GTP-bound translation factors.

In terms of biological role, forms part of the ribosomal stalk which helps the ribosome interact with GTP-bound translation factors. Is thus essential for accurate translation. The polypeptide is Large ribosomal subunit protein bL12 (Laribacter hongkongensis (strain HLHK9)).